Consider the following 209-residue polypeptide: uncharacterized protein (209 aa).

Residues Val-39–Asp-75 are a coiled coil. The tract at residues Thr-103–Lys-131 is disordered. The span at Asn-116–Ser-129 shows a compositional bias: polar residues.

Belongs to the asfivirus K205R family.

It localises to the host cytoplasm. Its function is as follows. Induces host endoplasmic reticulum stress and consequently activates autophagy and NF-kappa-B signaling pathway. In turn, may induce autophagy-mediated STING1 degradation and innate immune evasion. This is an uncharacterized protein from Ornithodoros (relapsing fever ticks).